The following is a 219-amino-acid chain: 2-hydroxy-3-keto-5-methylthiopentenyl-1-phosphate phosphatase (219 aa).

It belongs to the HAD-like hydrolase superfamily. MtnX family.

The enzyme catalyses 2-hydroxy-5-methylsulfanyl-3-oxopent-1-enyl phosphate + H2O = 1,2-dihydroxy-5-(methylsulfanyl)pent-1-en-3-one + phosphate. It functions in the pathway amino-acid biosynthesis; L-methionine biosynthesis via salvage pathway; L-methionine from S-methyl-5-thio-alpha-D-ribose 1-phosphate: step 4/6. Functionally, dephosphorylates 2-hydroxy-3-keto-5-methylthiopentenyl-1-phosphate (HK-MTPenyl-1-P) yielding 1,2-dihydroxy-3-keto-5-methylthiopentene (DHK-MTPene). The protein is 2-hydroxy-3-keto-5-methylthiopentenyl-1-phosphate phosphatase of Bacillus mycoides (strain KBAB4) (Bacillus weihenstephanensis).